We begin with the raw amino-acid sequence, 333 residues long: Tetraacyldisaccharide 4'-kinase (333 aa).

55–62 provides a ligand contact to ATP; that stretch reads TAGGNGKT.

This sequence belongs to the LpxK family.

It catalyses the reaction a lipid A disaccharide + ATP = a lipid IVA + ADP + H(+). The protein operates within glycolipid biosynthesis; lipid IV(A) biosynthesis; lipid IV(A) from (3R)-3-hydroxytetradecanoyl-[acyl-carrier-protein] and UDP-N-acetyl-alpha-D-glucosamine: step 6/6. Functionally, transfers the gamma-phosphate of ATP to the 4'-position of a tetraacyldisaccharide 1-phosphate intermediate (termed DS-1-P) to form tetraacyldisaccharide 1,4'-bis-phosphate (lipid IVA). This is Tetraacyldisaccharide 4'-kinase from Pectobacterium atrosepticum (strain SCRI 1043 / ATCC BAA-672) (Erwinia carotovora subsp. atroseptica).